A 382-amino-acid polypeptide reads, in one-letter code: Intermediate transcription factor 3 large subunit (382 aa).

This sequence belongs to the poxviruses A23 family. In terms of assembly, heterodimer of a 45 kDa and a 32 kDa subunit.

In terms of biological role, acts with RNA polymerase to initiate transcription from intermediate gene promoters. This chain is Intermediate transcription factor 3 large subunit (VITF3L), found in Monkeypox virus (strain Zaire-96-I-16) (MPX).